Here is a 325-residue protein sequence, read N- to C-terminus: Hydroxymethylglutaryl-CoA lyase, mitochondrial (325 aa).

Residues 1–27 (MASVRKAFPRRLVGLTSLRAVSTSSMG) constitute a mitochondrion transit peptide. Residues 33 to 300 (VKIVEVGPRD…HTGVNLQKLL (268 aa)) enclose the Pyruvate carboxyltransferase domain. Arg-41 serves as a coordination point for substrate. Asp-42 is a binding site for a divalent metal cation. Lys-48 carries the post-translational modification N6-acetyllysine; alternate. Lys-48 bears the N6-succinyllysine; alternate mark. Lys-111 bears the N6-acetyllysine mark. Residues Lys-137 and Lys-179 each carry the N6-acetyllysine; alternate modification. 2 positions are modified to N6-succinyllysine; alternate: Lys-137 and Lys-179. Residues His-233 and His-235 each contribute to the a divalent metal cation site. Cys-266 is an active-site residue. Asn-275 provides a ligand contact to a divalent metal cation. A Microbody targeting signal motif is present at residues 323–325 (CKL). An N6-acetyllysine modification is found at Lys-324.

The protein belongs to the HMG-CoA lyase family. As to quaternary structure, homodimer; disulfide-linked. Can also form homotetramers.

The protein resides in the mitochondrion matrix. The protein localises to the peroxisome. The enzyme catalyses (3S)-3-hydroxy-3-methylglutaryl-CoA = acetoacetate + acetyl-CoA. The protein operates within metabolic intermediate metabolism; (S)-3-hydroxy-3-methylglutaryl-CoA degradation; acetoacetate from (S)-3-hydroxy-3-methylglutaryl-CoA: step 1/1. Functionally, mitochondrial 3-hydroxy-3-methylglutaryl-CoA lyase that catalyzes a cation-dependent cleavage of (S)-3-hydroxy-3-methylglutaryl-CoA into acetyl-CoA and acetoacetate, a key step in ketogenesis. Terminal step in leucine catabolism. Ketone bodies (beta-hydroxybutyrate, acetoacetate and acetone) are essential as an alternative source of energy to glucose, as lipid precursors and as regulators of metabolism. The protein is Hydroxymethylglutaryl-CoA lyase, mitochondrial (Hmgcl) of Mus musculus (Mouse).